The primary structure comprises 684 residues: Nuclear transcription factor Y subunit gamma (684 aa).

4 disordered regions span residues 1–74 (MENQ…NIST), 112–238 (MNSP…SSFQ), 414–487 (HSPQ…TQQL), and 511–650 (QQQQ…KNDE). Residues 21–49 (SNSHNNHHNNNNNNNYNNNNNNNINNINN) are compositionally biased toward low complexity. The segment covering 58 to 74 (KSIQQHSPHSSTPNIST) has biased composition (polar residues). The segment covering 142-162 (HQHPSSASSSSSSSSSSLSSS) has biased composition (low complexity). Residues 163–176 (SHHHHSNHHHHHPN) show a composition bias toward basic residues. Residues 188-203 (PSLNDSSSNGNGTPAL) are compositionally biased toward polar residues. Over residues 220–238 (TPTSTPNQRFQSNGSSSFQ) the composition is skewed to low complexity. Over residues 414–423 (HSPQLQEQSS) the composition is skewed to polar residues. Residues 424 to 437 (NNNNNNNNNNNNNN) show a composition bias toward low complexity. 2 stretches are compositionally biased toward polar residues: residues 438–456 (SVSVKRSYSMEIQNSSPLS) and 464–477 (SQDYNFQYNENNHN). 3 stretches are compositionally biased toward low complexity: residues 478–487 (QSSLSQTQQL), 511–522 (QQQQHSQQISQQ), and 529–637 (PSNS…NNNN).

Belongs to the NFYC/HAP5 subunit family. Heterotrimeric transcription factor composed of three components, NF-YA, NF-YB and NF-YC. NF-YB and NF-YC must interact and dimerize for NF-YA association and DNA binding.

Its subcellular location is the nucleus. Its function is as follows. Stimulates the transcription of various genes by recognizing and binding to a CCAAT motif in promoters. In Dictyostelium discoideum (Social amoeba), this protein is Nuclear transcription factor Y subunit gamma (nfyc-1).